A 256-amino-acid chain; its full sequence is NH(3)-dependent NAD(+) synthetase (256 aa).

Position 29–36 (29–36 (GISGGIDS)) interacts with ATP. A Mg(2+)-binding site is contributed by D35. R115 lines the deamido-NAD(+) pocket. T135 contributes to the ATP binding site. E140 is a Mg(2+) binding site. Positions 148 and 155 each coordinate deamido-NAD(+). Residues K164 and S186 each contribute to the ATP site. Deamido-NAD(+) is bound at residue 245–246 (HK).

This sequence belongs to the NAD synthetase family. As to quaternary structure, homodimer.

It catalyses the reaction deamido-NAD(+) + NH4(+) + ATP = AMP + diphosphate + NAD(+) + H(+). Its pathway is cofactor biosynthesis; NAD(+) biosynthesis; NAD(+) from deamido-NAD(+) (ammonia route): step 1/1. Its function is as follows. Catalyzes the ATP-dependent amidation of deamido-NAD to form NAD. Uses ammonia as a nitrogen source. The polypeptide is NH(3)-dependent NAD(+) synthetase (Methanosarcina acetivorans (strain ATCC 35395 / DSM 2834 / JCM 12185 / C2A)).